Here is a 572-residue protein sequence, read N- to C-terminus: Urease subunit alpha (572 aa).

In terms of domain architecture, Urease spans 130-572 (GGVDTHIHFI…LPMAQRYFLF (443 aa)). The Ni(2+) site is built by His135, His137, and Lys218. Lys218 carries the N6-carboxylysine modification. Residue His220 participates in substrate binding. Residues His247 and His273 each coordinate Ni(2+). Residue His321 is the Proton donor of the active site. Asp361 lines the Ni(2+) pocket.

Belongs to the metallo-dependent hydrolases superfamily. Urease alpha subunit family. Heterotrimer of UreA (gamma), UreB (beta) and UreC (alpha) subunits. Three heterotrimers associate to form the active enzyme. Ni cation is required as a cofactor. Post-translationally, carboxylation allows a single lysine to coordinate two nickel ions.

The protein resides in the cytoplasm. The enzyme catalyses urea + 2 H2O + H(+) = hydrogencarbonate + 2 NH4(+). Its pathway is nitrogen metabolism; urea degradation; CO(2) and NH(3) from urea (urease route): step 1/1. This Ralstonia nicotianae (strain ATCC BAA-1114 / GMI1000) (Ralstonia solanacearum) protein is Urease subunit alpha.